The following is a 441-amino-acid chain: Ribulose bisphosphate carboxylase large chain (441 aa).

Substrate is bound by residues N89 and T139. K141 serves as the catalytic Proton acceptor. Substrate is bound at residue K143. K167, D169, and E170 together coordinate Mg(2+). At K167 the chain carries N6-carboxylysine. The active-site Proton acceptor is H260. Residues R261, H293, and S345 each coordinate substrate.

This sequence belongs to the RuBisCO large chain family. Type I subfamily. In terms of assembly, heterohexadecamer of 8 large chains and 8 small chains; disulfide-linked. The disulfide link is formed within the large subunit homodimers. It depends on Mg(2+) as a cofactor. The disulfide bond which can form in the large chain dimeric partners within the hexadecamer appears to be associated with oxidative stress and protein turnover.

Its subcellular location is the plastid. The protein resides in the chloroplast. It carries out the reaction 2 (2R)-3-phosphoglycerate + 2 H(+) = D-ribulose 1,5-bisphosphate + CO2 + H2O. It catalyses the reaction D-ribulose 1,5-bisphosphate + O2 = 2-phosphoglycolate + (2R)-3-phosphoglycerate + 2 H(+). In terms of biological role, ruBisCO catalyzes two reactions: the carboxylation of D-ribulose 1,5-bisphosphate, the primary event in carbon dioxide fixation, as well as the oxidative fragmentation of the pentose substrate in the photorespiration process. Both reactions occur simultaneously and in competition at the same active site. This chain is Ribulose bisphosphate carboxylase large chain, found in Coriandrum sativum (Coriander).